A 402-amino-acid polypeptide reads, in one-letter code: L-threonine ammonia-lyase (402 aa).

The residue at position 51 (K51) is an N6-(pyridoxal phosphate)lysine. Pyridoxal 5'-phosphate-binding positions include N78, 178–181 (GGGL), and S302. Residues 327–402 (KLKVELDDLP…GVGYLVDVLK (76 aa)) form the ACT domain.

It belongs to the serine/threonine dehydratase family. Pyridoxal 5'-phosphate is required as a cofactor.

The catalysed reaction is L-threonine = 2-oxobutanoate + NH4(+). It carries out the reaction L-serine = pyruvate + NH4(+). The protein operates within amino-acid biosynthesis; L-isoleucine biosynthesis; 2-oxobutanoate from L-threonine: step 1/1. Its function is as follows. Catalyzes the conversion of threonine to 2-oxobutanoate and ammonia. Functions in the threonine-dependent pathway of isoleucine biosynthesis, which is the minor pathway for isoleucine biosynthesis in G.sulfurreducens. Also displays serine ammonia-lyase activity, yielding pyruvate from L-serine. This chain is L-threonine ammonia-lyase, found in Geobacter sulfurreducens (strain ATCC 51573 / DSM 12127 / PCA).